We begin with the raw amino-acid sequence, 1367 residues long: Mediator of RNA polymerase II transcription subunit 23 (1367 aa).

The tract at residues 1343 to 1367 (PPQALSSGSPAPQANQVPTALPVTQ) is disordered. Residues 1346–1367 (ALSSGSPAPQANQVPTALPVTQ) are compositionally biased toward polar residues.

This sequence belongs to the Mediator complex subunit 23 family. As to quaternary structure, component of the Mediator complex, which is composed of MED1, MED4, MED6, MED7, MED8, MED9, MED10, MED11, MED12, MED13, MED13L, MED14, MED15, MED16, MED17, MED18, MED19, MED20, MED21, MED22, MED23, MED24, MED25, MED26, MED27, MED29, MED30, MED31, CCNC, CDK8 and CDC2L6/CDK11. The MED12, MED13, CCNC and CDK8 subunits form a distinct module termed the CDK8 module. Mediator containing the CDK8 module is less active than Mediator lacking this module in supporting transcriptional activation. Individual preparations of the Mediator complex lacking one or more distinct subunits have been variously termed ARC, CRSP, DRIP, PC2, SMCC and TRAP. Interacts with CDK8, CEBPB, CTNNB1, ELK1 and GLI3. Interacts with the adenovirus E1A protein.

The protein localises to the nucleus. Functionally, component of the Mediator complex, a coactivator involved in the regulated transcription of nearly all RNA polymerase II-dependent genes. Mediator functions as a bridge to convey information from gene-specific regulatory proteins to the basal RNA polymerase II transcription machinery. Mediator is recruited to promoters by direct interactions with regulatory proteins and serves as a scaffold for the assembly of a functional pre-initiation complex with RNA polymerase II and the general transcription factors. Also required for transcriptional activation subsequent to the assembly of the pre-initiation complex. Required for transcriptional activation by adenovirus E1A protein. Required for ELK1-dependent transcriptional activation in response to activated Ras signaling. This is Mediator of RNA polymerase II transcription subunit 23 (Med23) from Rattus norvegicus (Rat).